The chain runs to 71 residues: Beta-defensin 2 (71 aa).

The signal sequence occupies residues 1–20; that stretch reads MRTLCSLLLICCLLFSYTTP. 3 disulfide bridges follow: Cys37/Cys66, Cys44/Cys59, and Cys49/Cys67.

Belongs to the beta-defensin family. As to expression, kidney, uterus and to a lesser extent in heart.

It localises to the secreted. Functionally, has bactericidal activity. This chain is Beta-defensin 2 (Defb2), found in Mus musculus (Mouse).